A 687-amino-acid polypeptide reads, in one-letter code: Probable WRKY transcription factor 2 (687 aa).

Residues 197 to 276 (YGNYNNRSSS…AGGAPAEDGY (80 aa)) are disordered. Composition is skewed to polar residues over residues 199–208 (NYNNRSSSHQ) and 219–249 (NIES…TSLE). The WRKY 1 DNA-binding region spans 267–331 (AGGAPAEDGY…YKGAHNHLKP (65 aa)). Cys298, Cys303, His326, and His328 together coordinate Zn(2+). Disordered stretches follow at residues 324 to 384 (GAHN…STRF) and 416 to 453 (FSND…ESKR). A compositionally biased stretch (polar residues) spans 354–379 (RDSAATWVSCNNTQQQGGSNENNVEE). Residues 435-444 (YDGGGGGGGG) are compositionally biased toward gly residues. The WRKY 2 DNA-binding region spans 481 to 546 (SDVDILDDGY…YEGKHNHDVP (66 aa)). 4 residues coordinate Zn(2+): Cys512, Cys517, His541, and His543. The segment at 537–599 (YEGKHNHDVP…QVTTNNQSPF (63 aa)) is disordered. Gly residues predominate over residues 553-565 (HGGGGDSGNGNSG). Over residues 578-589 (HHSEPPRGRFDR) the composition is skewed to basic and acidic residues. Residues 590–599 (QVTTNNQSPF) are compositionally biased toward polar residues.

This sequence belongs to the WRKY group I family. In terms of tissue distribution, low expression in senescent leaves. Expressed in both the unfertilized egg cell and the pollen tube.

Its subcellular location is the nucleus. In terms of biological role, transcription factor. Regulates WOX8 and WOX9 expression and basal cell division patterns during early embryogenesis. Interacts specifically with the W box (5'-(T)TGAC[CT]-3'), a frequently occurring elicitor-responsive cis-acting element. Required to repolarize the zygote from a transient symmetric state. The polypeptide is Probable WRKY transcription factor 2 (Arabidopsis thaliana (Mouse-ear cress)).